The sequence spans 266 residues: MTLFEIIILAIIQGVTEFLPISSSGHLLLPAELLGWVSQGLAFDVAVHVGSLLAVMIYFRQEIGQMTVAWVTQGFSKQQSTDSKLAWYVIVGTIPAVIIGFLMKGWIEENARTALVIAGTTIIFGLLLWYADATAKREQELEGLTLKQAIYIGLAQVLALIPGTSRSGITMTAGLMLGLKREACARFSFLLSIPVILGAGLLATLDLLSANEAVDWYALLYGAAFSFVSAYLCIYLFLSWIARIGMLPFVIYRLALGAVLLWFVFA.

A run of 8 helical transmembrane segments spans residues 1–21 (MTLFEIIILAIIQGVTEFLPI), 39–59 (QGLAFDVAVHVGSLLAVMIYF), 87–107 (WYVIVGTIPAVIIGFLMKGWI), 113–133 (TALVIAGTTIIFGLLLWYADA), 143–163 (GLTLKQAIYIGLAQVLALIPG), 187–207 (FSFLLSIPVILGAGLLATLDL), 218–238 (ALLYGAAFSFVSAYLCIYLFL), and 244–264 (IGMLPFVIYRLALGAVLLWFV).

The protein belongs to the UppP family.

The protein localises to the cell inner membrane. The enzyme catalyses di-trans,octa-cis-undecaprenyl diphosphate + H2O = di-trans,octa-cis-undecaprenyl phosphate + phosphate + H(+). In terms of biological role, catalyzes the dephosphorylation of undecaprenyl diphosphate (UPP). Confers resistance to bacitracin. In Alteromonas mediterranea (strain DSM 17117 / CIP 110805 / LMG 28347 / Deep ecotype), this protein is Undecaprenyl-diphosphatase.